Here is a 374-residue protein sequence, read N- to C-terminus: Fatty acid conjugase FAC2 A (374 aa).

2 helical membrane-spanning segments follow: residues 50–70 and 74–94; these read IIVT…LPGF and IVWP…WMIG. The Histidine box-1 signature appears at 95–99; that stretch reads HECGH. Residues 131 to 135 carry the Histidine box-2 motif; the sequence is HRNHH. Transmembrane regions (helical) follow at residues 168 to 188, 219 to 239, and 246 to 266; these read MGLM…YIMF, VLFS…IVMV, and FYVY…ATYL. The short motif at 306-310 is the Histidine box-3 element; it reads HVIHH.

This sequence belongs to the fatty acid desaturase type 1 family. In terms of tissue distribution, expressed exclusively in the developing seeds. Not detected in leaves or flower buds.

It localises to the microsome membrane. It carries out the reaction a (9Z,12Z)-octadecadienoyl-containing glycerolipid + AH2 + O2 = a (8E,10E,12Z)-octadecatrienoyl-containing glycerolipid + A + 2 H2O. It participates in lipid metabolism; polyunsaturated fatty acid biosynthesis. Fatty acid conjugase converting 18:2(9Z, 12Z) to calendic acid 18:3(8E, 10E, 12Z). Converts alpha-linolenic acid (18:3(9Z, 12Z, 15Z)) into 18:4(8E, 10E, 12Z, 15Z). Also has weak activity on the mono-unsaturates 16:1(9Z) and 18:1(9Z) producing two conjugated double bonds at delta(8) and delta(10) position. This is Fatty acid conjugase FAC2 A from Calendula officinalis (Pot marigold).